The chain runs to 95 residues: MLQSNEYFSGKVKSIGFTSSSTGRASVGVMAEGEYTFGTAEPEEMTVISGALNVLLPGETEWKVYTAGQVFNVPGHSEFHLQVAEPTSYLCRYLK.

It belongs to the nucleoside phosphorylase PpnP family.

It catalyses the reaction a purine D-ribonucleoside + phosphate = a purine nucleobase + alpha-D-ribose 1-phosphate. The catalysed reaction is adenosine + phosphate = alpha-D-ribose 1-phosphate + adenine. The enzyme catalyses cytidine + phosphate = cytosine + alpha-D-ribose 1-phosphate. It carries out the reaction guanosine + phosphate = alpha-D-ribose 1-phosphate + guanine. It catalyses the reaction inosine + phosphate = alpha-D-ribose 1-phosphate + hypoxanthine. The catalysed reaction is thymidine + phosphate = 2-deoxy-alpha-D-ribose 1-phosphate + thymine. The enzyme catalyses uridine + phosphate = alpha-D-ribose 1-phosphate + uracil. It carries out the reaction xanthosine + phosphate = alpha-D-ribose 1-phosphate + xanthine. Catalyzes the phosphorolysis of diverse nucleosides, yielding D-ribose 1-phosphate and the respective free bases. Can use uridine, adenosine, guanosine, cytidine, thymidine, inosine and xanthosine as substrates. Also catalyzes the reverse reactions. The sequence is that of Pyrimidine/purine nucleoside phosphorylase from Enterobacter sp. (strain 638).